We begin with the raw amino-acid sequence, 612 residues long: Baculoviral IAP repeat-containing protein 2 (612 aa).

The stretch at 46–113 (ELYRMSTYSA…RQFYPSCSFV (68 aa)) is one BIR 1 repeat. At R143 the chain carries Omega-N-methylarginine. S153 carries the post-translational modification Phosphoserine. BIR repeat units follow at residues 177-243 (EEAR…CPFL) and 262-329 (HSAR…CEFL). Residues C299, C302, H319, and C326 each contribute to the Zn(2+) site. The 91-residue stretch at 447–537 (MASGDLSLIR…TLYENLFVEK (91 aa)) folds into the CARD domain. The RING-type zinc finger occupies 565 to 600 (CKVCMDREVSIVFIPCGHLVVCQECAPSLRKCPICR).

Belongs to the IAP family. Interacts with DIABLO/SMAC and with PRSS25; these interactions inhibit apoptotic suppressor activity. Interacts with CASP9. Interacts (via BIR domains) with TRAF2; the interaction is required for IKBKE ubiquitination. Interacts with E2F1, RIPK1, RIPK2, RIPK3, RIPK4, BIRC5/survivin and USP19. Interacts with HSP90AB1. Interacts with several death receptors, inclusing FAS, TNFRSF10A and TNFRSF10B. Recruited to TNFRSF10B in the absence of receptor stimulation. When TNFRSF10B is stimulated, further recruited to the receptor and cleaved by caspases. Proteolytic fragments remain associated with TNFRSF10B. Post-translationally, auto-ubiquitinated and degraded by the proteasome in apoptotic cells. Upon stimulation of death receptors, including TNFRSF10B, recruited to receptors and cleaved by caspases. Proteolytic fragments remain associated with the receptors. This cleavage presumably inactivates the protein. Expressed in heart, brain, spleen, lung, liver, skeletal muscle, kidney and testis.

It is found in the cytoplasm. The protein resides in the nucleus. It carries out the reaction S-ubiquitinyl-[E2 ubiquitin-conjugating enzyme]-L-cysteine + [acceptor protein]-L-lysine = [E2 ubiquitin-conjugating enzyme]-L-cysteine + N(6)-ubiquitinyl-[acceptor protein]-L-lysine.. Its activity is regulated as follows. The CARD domain inhibits the activation of E3 ubiquitin ligase activity by preventing RING domain dimerization and E2 ubiquitin donor binding and activation. The CARD domain-mediated autoinhibition of the E3 ubiquitin-protein ligase activity suppresses cell proliferation and migration. USP19 regulates the stability of BIRC2/c-IAP1 by preventing its ubiquitination. Its function is as follows. Multi-functional protein which regulates not only caspases and apoptosis, but also modulates inflammatory signaling and immunity, mitogenic kinase signaling, and cell proliferation, as well as cell invasion and metastasis. Acts as an E3 ubiquitin-protein ligase regulating NF-kappa-B signaling and regulates both canonical and non-canonical NF-kappa-B signaling by acting in opposite directions: acts as a positive regulator of the canonical pathway and suppresses constitutive activation of non-canonical NF-kappa-B signaling. The target proteins for its E3 ubiquitin-protein ligase activity include: RIPK1, RIPK2, RIPK3, RIPK4, CASP3, CASP7, CASP8, TRAF2, DIABLO/SMAC, MAP3K14/NIK, MAP3K5/ASK1, IKBKG/NEMO, IKBKE and MXD1/MAD1. Can also function as an E3 ubiquitin-protein ligase of the NEDD8 conjugation pathway, targeting effector caspases for neddylation and inactivation. Acts as an important regulator of innate immune signaling via regulation of Toll-like receptors (TLRs), Nodlike receptors (NLRs) and RIG-I like receptors (RLRs), collectively referred to as pattern recognition receptors (PRRs). Protects cells from spontaneous formation of the ripoptosome, a large multi-protein complex that has the capability to kill cancer cells in a caspase-dependent and caspase-independent manner. Suppresses ripoptosome formation by ubiquitinating RIPK1 and CASP8. Can stimulate the transcriptional activity of E2F1. Plays a role in the modulation of the cell cycle. This is Baculoviral IAP repeat-containing protein 2 (Birc2) from Mus musculus (Mouse).